Here is a 100-residue protein sequence, read N- to C-terminus: Coiled-coil domain-containing protein 167 (100 aa).

A coiled-coil region spans residues valine 14–methionine 81. A helical transmembrane segment spans residues methionine 82 to isoleucine 99.

It localises to the membrane. The chain is Coiled-coil domain-containing protein 167 (ccdc167) from Danio rerio (Zebrafish).